The primary structure comprises 262 residues: Tryptophan synthase alpha chain (262 aa).

Active-site proton acceptor residues include Glu-47 and Asp-58.

This sequence belongs to the TrpA family. As to quaternary structure, tetramer of two alpha and two beta chains.

It catalyses the reaction (1S,2R)-1-C-(indol-3-yl)glycerol 3-phosphate + L-serine = D-glyceraldehyde 3-phosphate + L-tryptophan + H2O. Its pathway is amino-acid biosynthesis; L-tryptophan biosynthesis; L-tryptophan from chorismate: step 5/5. The alpha subunit is responsible for the aldol cleavage of indoleglycerol phosphate to indole and glyceraldehyde 3-phosphate. The polypeptide is Tryptophan synthase alpha chain (Chromobacterium violaceum (strain ATCC 12472 / DSM 30191 / JCM 1249 / CCUG 213 / NBRC 12614 / NCIMB 9131 / NCTC 9757 / MK)).